The primary structure comprises 194 residues: Large ribosomal subunit protein eL15 (194 aa).

The segment at 158-194 is disordered; it reads ANRGLTSAGKKGRGLMYKGKGAEKARPGVRANGKKTK.

The protein belongs to the eukaryotic ribosomal protein eL15 family.

The sequence is that of Large ribosomal subunit protein eL15 from Methanococcus maripaludis (strain DSM 14266 / JCM 13030 / NBRC 101832 / S2 / LL).